We begin with the raw amino-acid sequence, 144 residues long: Universal stress protein F (144 aa).

Belongs to the universal stress protein A family. Homodimer.

The chain is Universal stress protein F (uspF) from Salmonella typhi.